Reading from the N-terminus, the 206-residue chain is Acireductone dioxygenase (206 aa).

Residues His102, His104, Glu108, and His146 each contribute to the Fe(2+) site. Ni(2+)-binding residues include His102, His104, Glu108, and His146.

The protein belongs to the acireductone dioxygenase (ARD) family. As to quaternary structure, monomer. The cofactor is Fe(2+). Requires Ni(2+) as cofactor.

It catalyses the reaction 1,2-dihydroxy-5-(methylsulfanyl)pent-1-en-3-one + O2 = 3-(methylsulfanyl)propanoate + CO + formate + 2 H(+). The catalysed reaction is 1,2-dihydroxy-5-(methylsulfanyl)pent-1-en-3-one + O2 = 4-methylsulfanyl-2-oxobutanoate + formate + 2 H(+). It functions in the pathway amino-acid biosynthesis; L-methionine biosynthesis via salvage pathway; L-methionine from S-methyl-5-thio-alpha-D-ribose 1-phosphate: step 5/6. In terms of biological role, catalyzes 2 different reactions between oxygen and the acireductone 1,2-dihydroxy-3-keto-5-methylthiopentene (DHK-MTPene) depending upon the metal bound in the active site. Fe-containing acireductone dioxygenase (Fe-ARD) produces formate and 2-keto-4-methylthiobutyrate (KMTB), the alpha-ketoacid precursor of methionine in the methionine recycle pathway. Ni-containing acireductone dioxygenase (Ni-ARD) produces methylthiopropionate, carbon monoxide and formate, and does not lie on the methionine recycle pathway. The chain is Acireductone dioxygenase from Frankia alni (strain DSM 45986 / CECT 9034 / ACN14a).